A 431-amino-acid polypeptide reads, in one-letter code: Hemagglutinin-esterase (431 aa).

An N-terminal signal peptide occupies residues 1 to 21 (MARTDAMAPRTLLLVLSLGYA). Positions 11–131 (TLLLVLSLGY…DNNRWMGNKA (121 aa)) are esterase domain 1. Over 22 to 399 (FGFNEPLNVV…PVCMYDPLPV (378 aa)) the chain is Virion surface. Catalysis depends on Ser-44, which acts as the Nucleophile. Cys-48 and Cys-69 are oxidised to a cystine. Asn-53, Asn-93, Asn-151, Asn-157, Asn-199, Asn-244, Asn-248, and Asn-309 each carry an N-linked (GlcNAc...) asparagine; by host glycan. Cys-117 and Cys-166 are disulfide-bonded. The interval 132-274 (RFYTQLYQKM…GNYISISNEL (143 aa)) is receptor binding. Cystine bridges form between Cys-205-Cys-284 and Cys-213-Cys-257. The esterase domain 2 stretch occupies residues 275–387 (LLTVPSKAIC…HCPTAANIVF (113 aa)). Cysteines 315 and 320 form a disulfide. Asn-324 carries N-linked (GlcNAc...) asparagine; by host glycosylation. Residues Asp-334 and His-337 each act as charge relay system in the active site. Asn-352 and Asn-366 each carry an N-linked (GlcNAc...) asparagine; by host glycan. Cys-355 and Cys-379 are joined by a disulfide. Residues 400-420 (ILLGVLLGIAVLIIVFLMFYF) form a helical membrane-spanning segment. At 421-431 (MTDSGVRLHEA) the chain is on the intravirion side.

Belongs to the influenza type C/coronaviruses hemagglutinin-esterase family. Homodimer; disulfide-linked. Forms a complex with the M protein in the pre-Golgi. Associates then with S-M complex to form a ternary complex S-M-HE. N-glycosylated in the host RER.

Its subcellular location is the virion membrane. The protein resides in the host cell membrane. It catalyses the reaction N-acetyl-9-O-acetylneuraminate + H2O = N-acetylneuraminate + acetate + H(+). It carries out the reaction N-acetyl-4-O-acetylneuraminate + H2O = N-acetylneuraminate + acetate + H(+). Functionally, structural protein that makes short spikes at the surface of the virus. Contains receptor binding and receptor-destroying activities. Mediates de-O-acetylation of N-acetyl-4-O-acetylneuraminic acid, which is probably the receptor determinant recognized by the virus on the surface of erythrocytes and susceptible cells. This receptor-destroying activity is important for virus release as it probably helps preventing self-aggregation and ensures the efficient spread of the progeny virus from cell to cell. May serve as a secondary viral attachment protein for initiating infection, the spike protein being the major one. May become a target for both the humoral and the cellular branches of the immune system. This Murine coronavirus (strain DVIM) (MHV-DVIM) protein is Hemagglutinin-esterase.